The sequence spans 211 residues: MRVRNRKGATELLEANPQYVVLNFLEAKAKWRDLFGNDNPIHVEVGSGKGAFVSGMAKQNPDINYIGIDIQKSVLSYALDKVLEAGVSNIKLLWVDGSDLTDYFEDGEIDRLYLNFSDPWPKKRHEKRRLTYKTFLDTFKRILPENGEIHFKTDNRGLFEYSLVSFSQYGMKLNGVWLDLHASDFEGNVMTEYEQKFSNKGQVIYRVEAEF.

S-adenosyl-L-methionine contacts are provided by Glu-44, Asp-69, Asp-96, and Asp-118. The active site involves Asp-118. Lys-122 lines the substrate pocket. The interaction with RNA stretch occupies residues 124-129 (RHEKRR). Residues Asp-154 and 191–194 (TEYE) each bind substrate.

Belongs to the class I-like SAM-binding methyltransferase superfamily. TrmB family.

The catalysed reaction is guanosine(46) in tRNA + S-adenosyl-L-methionine = N(7)-methylguanosine(46) in tRNA + S-adenosyl-L-homocysteine. The protein operates within tRNA modification; N(7)-methylguanine-tRNA biosynthesis. In terms of biological role, catalyzes the formation of N(7)-methylguanine at position 46 (m7G46) in tRNA. This Streptococcus pneumoniae (strain CGSP14) protein is tRNA (guanine-N(7)-)-methyltransferase.